Here is a 275-residue protein sequence, read N- to C-terminus: Phosphatidylglycerol--prolipoprotein diacylglyceryl transferase (275 aa).

The next 3 helical transmembrane spans lie at 18-38, 55-75, and 89-109; these read IEVHWYGIIIAAGILLGYFIA, IIFWSAIFGFITARIYFVIFQ, and IWHGGIAIHGGLIGGFITGVI. Arginine 137 contributes to the a 1,2-diacyl-sn-glycero-3-phospho-(1'-sn-glycerol) binding site. The next 2 helical transmembrane spans lie at 203–223 and 235–255; these read IGETFFTYLIWYSIGRFFVEG and IRVAQLVSILLILIGIAMIIY.

The protein belongs to the Lgt family.

It localises to the cell membrane. The enzyme catalyses L-cysteinyl-[prolipoprotein] + a 1,2-diacyl-sn-glycero-3-phospho-(1'-sn-glycerol) = an S-1,2-diacyl-sn-glyceryl-L-cysteinyl-[prolipoprotein] + sn-glycerol 1-phosphate + H(+). The protein operates within protein modification; lipoprotein biosynthesis (diacylglyceryl transfer). In terms of biological role, catalyzes the transfer of the diacylglyceryl group from phosphatidylglycerol to the sulfhydryl group of the N-terminal cysteine of a prolipoprotein, the first step in the formation of mature lipoproteins. In Staphylococcus carnosus (strain TM300), this protein is Phosphatidylglycerol--prolipoprotein diacylglyceryl transferase.